A 193-amino-acid polypeptide reads, in one-letter code: Superoxide dismutase [Fe] (193 aa).

His-27, His-74, Asp-157, and His-161 together coordinate Fe cation.

The protein belongs to the iron/manganese superoxide dismutase family. Homodimer. The cofactor is Fe cation.

The catalysed reaction is 2 superoxide + 2 H(+) = H2O2 + O2. In terms of biological role, destroys superoxide anion radicals which are normally produced within the cells and which are toxic to biological systems. The protein is Superoxide dismutase [Fe] (sodB) of Salmonella typhimurium (strain LT2 / SGSC1412 / ATCC 700720).